A 258-amino-acid chain; its full sequence is Acyl-[acyl-carrier-protein]--UDP-N-acetylglucosamine O-acyltransferase (258 aa).

It belongs to the transferase hexapeptide repeat family. LpxA subfamily. In terms of assembly, homotrimer.

It localises to the cytoplasm. It catalyses the reaction a (3R)-hydroxyacyl-[ACP] + UDP-N-acetyl-alpha-D-glucosamine = a UDP-3-O-[(3R)-3-hydroxyacyl]-N-acetyl-alpha-D-glucosamine + holo-[ACP]. It functions in the pathway glycolipid biosynthesis; lipid IV(A) biosynthesis; lipid IV(A) from (3R)-3-hydroxytetradecanoyl-[acyl-carrier-protein] and UDP-N-acetyl-alpha-D-glucosamine: step 1/6. Functionally, involved in the biosynthesis of lipid A, a phosphorylated glycolipid that anchors the lipopolysaccharide to the outer membrane of the cell. This Pseudomonas fluorescens (strain Pf0-1) protein is Acyl-[acyl-carrier-protein]--UDP-N-acetylglucosamine O-acyltransferase.